Consider the following 899-residue polypeptide: Toll-like receptor 4 (899 aa).

An N-terminal signal peptide occupies residues 1 to 46; the sequence is MCPLQIHVLHLIQGNQKNRKGKYVNMTRQLWYILPLLFLLCHCVTS. N-linked (GlcNAc...) asparagine glycans are attached at residues Asn25, Asn75, Asn83, and Asn93. The Extracellular portion of the chain corresponds to 47–702; the sequence is ERRCYFSKIS…LERNCRSYTA (656 aa). 7 LRR repeats span residues 83 to 103, 104 to 126, 128 to 150, 155 to 179, 181 to 202, 203 to 229, and 230 to 253; these read NESV…PDLP, RSLL…AFAR, QNLT…LTAG, LTRL…VLSD, VSLN…MRKI, HALK…YFQN, and VHGI…TFSY. Asn129, Asn137, Asn146, and Asn168 each carry an N-linked (GlcNAc...) asparagine glycan. 4 N-linked (GlcNAc...) asparagine glycosylation sites follow: Asn237, Asn256, Asn275, and Asn313. LRR repeat units follow at residues 257–282, 313–336, 338–360, and 363–386; these read LTHL…DLKN, NTSL…VLMY, PKTL…ALET, and LVNL…IFSN. Asn388, Asn432, and Asn463 each carry an N-linked (GlcNAc...) asparagine glycan. LRR repeat units follow at residues 468 to 493, 501 to 524, 526 to 549, 554 to 577, 579 to 601, 602 to 624, and 631 to 654; these read HYPL…VFYD, LEGL…FFDY, TGLK…EKGE, LLKL…ILRN, ISLE…LKHI, KGLR…VMRE, and SSNL…HFLR. A glycan (N-linked (GlcNAc...) asparagine) is linked at Asn516. N-linked (GlcNAc...) asparagine glycosylation is found at Asn633, Asn637, and Asn668. Residues 703–723 traverse the membrane as a helical segment; the sequence is VIVLFSCVFVILLTVIVCGVV. At 724 to 899 the chain is on the cytoplasmic side; sequence YRYRWKLRYL…WRKLRDPISM (176 aa). One can recognise a TIR domain in the interval 756–897; that stretch reads YEFDAFISYA…IFWRKLRDPI (142 aa).

It belongs to the Toll-like receptor family. Expressed in all tissues tested. The highest expression is in the hepatopancreas, with moderate expression in the gills, and low expression in the gonads, adductor muscle, hemocytes, and mantle.

Its subcellular location is the cell membrane. Its function is as follows. May be involved in the innate immune response. The chain is Toll-like receptor 4 from Pinctada imbricata (Atlantic pearl-oyster).